The primary structure comprises 1102 residues: Probable DNA-directed RNA polymerase (1102 aa).

Residues Asp-734, Lys-804, and Asp-980 contribute to the active site.

Belongs to the phage and mitochondrial RNA polymerase family.

It localises to the mitochondrion. It carries out the reaction RNA(n) + a ribonucleoside 5'-triphosphate = RNA(n+1) + diphosphate. Functionally, DNA-dependent RNA polymerase catalyzes the transcription of DNA into RNA using the four ribonucleoside triphosphates as substrates. The chain is Probable DNA-directed RNA polymerase from Agaricus bitorquis (Pavement mushroom).